Reading from the N-terminus, the 372-residue chain is Cell division protein FtsZ 1 (372 aa).

Residues 51 to 55, 138 to 140, Glu-169, Arg-173, and Asp-216 each bind GTP; these read GAGCN and GTG. Over residues 350-360 the composition is skewed to acidic residues; the sequence is PEEETPLETPE. The segment at 350–372 is disordered; sequence PEEETPLETPEESPSIEISIPEL. Low complexity predominate over residues 361–372; it reads ESPSIEISIPEL.

It belongs to the FtsZ family. In terms of assembly, homodimer. Polymerizes to form a dynamic ring structure in a strictly GTP-dependent manner. Interacts directly with several other division proteins.

The protein localises to the cytoplasm. In terms of biological role, essential cell division protein that forms a contractile ring structure (Z ring) at the future cell division site. The regulation of the ring assembly controls the timing and the location of cell division. One of the functions of the FtsZ ring is to recruit other cell division proteins to the septum to produce a new cell wall between the dividing cells. Binds GTP and shows GTPase activity. The chain is Cell division protein FtsZ 1 from Pyrococcus furiosus (strain ATCC 43587 / DSM 3638 / JCM 8422 / Vc1).